The sequence spans 90 residues: Acylphosphatase (90 aa).

One can recognise an Acylphosphatase-like domain in the interval 3 to 90 (KKQFVVYGIV…HSFGLFSVEH (88 aa)). Residues Arg18 and Asn36 contribute to the active site.

This sequence belongs to the acylphosphatase family.

The enzyme catalyses an acyl phosphate + H2O = a carboxylate + phosphate + H(+). In Mannheimia succiniciproducens (strain KCTC 0769BP / MBEL55E), this protein is Acylphosphatase (acyP).